A 662-amino-acid polypeptide reads, in one-letter code: Glutathione hydrolase 7 (662 aa).

At 1 to 106 (MAAENEASQE…ASECSCRQDG (106 aa)) the chain is on the cytoplasmic side. A phosphoserine mark is found at serine 17, serine 72, serine 79, and serine 83. The disordered stretch occupies residues 26-90 (SFPRLPEDEP…DGSPLRETRK (65 aa)). Over residues 72–83 (SSSSEMGSQDGS) the composition is skewed to low complexity. A helical; Signal-anchor for type II membrane protein membrane pass occupies residues 107–127 (LTVIVTACLTFATGVTVALIM). Topologically, residues 128–662 (QIYFGDPQIF…SPDAAGATIL (535 aa)) are extracellular. Asparagine 198, asparagine 267, asparagine 283, asparagine 330, asparagine 353, asparagine 394, asparagine 452, asparagine 519, and asparagine 586 each carry an N-linked (GlcNAc...) asparagine glycan.

The protein belongs to the gamma-glutamyltransferase family. In terms of assembly, heterodimer composed of the light and heavy chains. The active site is located in the light chain. Post-translationally, cleaved by autocatalysis into a large and a small subunit and the autocatalytic cleavage is essential to the functional activation of the enzyme.

It is found in the membrane. The enzyme catalyses an N-terminal (5-L-glutamyl)-[peptide] + an alpha-amino acid = 5-L-glutamyl amino acid + an N-terminal L-alpha-aminoacyl-[peptide]. It catalyses the reaction glutathione + H2O = L-cysteinylglycine + L-glutamate. The catalysed reaction is an S-substituted glutathione + H2O = an S-substituted L-cysteinylglycine + L-glutamate. Its pathway is sulfur metabolism; glutathione metabolism. In terms of biological role, hydrolyzes and transfers gamma-glutamyl moieties from glutathione and other gamma-glutamyl compounds to acceptors. The chain is Glutathione hydrolase 7 from Bos taurus (Bovine).